Reading from the N-terminus, the 474-residue chain is ERO1-like protein alpha (474 aa).

Residues M1–S29 form the signal peptide. Cystine bridges form between C40/C53, C42/C51, C90/C398, C99/C104, C99/C138, C104/C109, C215/C248, and C401/C404. The FAD site is built by R194, T196, and W207. S259, H262, R294, and R307 together coordinate FAD. Residues N340 and N391 are each glycosylated (N-linked (GlcNAc...) asparagine). N430 carries N-linked (GlcNAc...) asparagine glycosylation.

The protein belongs to the EROs family. As to quaternary structure, predominantly monomer. May function both as a monomer and a homodimer. FAD is required as a cofactor. Post-translationally, the Cys-99/Cys-104 and Cys-401/Cys-404 disulfide bonds constitute the redox-active center. The Cys-99/Cys-104 disulfide bond may accept electron from protein disulfide isomerase (PDI) and funnel them to the active site disulfide Cys-401/Cys-404.

It localises to the endoplasmic reticulum membrane. Enzyme activity is tightly regulated to prevent the accumulation of reactive oxygen species in the endoplasmic reticulum. Reversibly down-regulated by the formation of disulfide bonds between the active site Cys-99 and Cys-138, and between Cys-104 and Cys-109. Glutathione may be required to regulate its activity in the endoplasmic reticulum. Oxidoreductase involved in disulfide bond formation in the endoplasmic reticulum. Efficiently reoxidizes P4HB/PDI, the enzyme catalyzing protein disulfide formation, in order to allow P4HB to sustain additional rounds of disulfide formation. Following P4HB reoxidation, passes its electrons to molecular oxygen via FAD, leading to the production of reactive oxygen species (ROS) in the cell. Required for the folding of immunoglobulins. The chain is ERO1-like protein alpha from Xenopus tropicalis (Western clawed frog).